Here is a 1251-residue protein sequence, read N- to C-terminus: Cyclic nucleotide-gated channel beta-1 (1251 aa).

4 disordered regions span residues 1-75 (MLGW…QETK), 121-151 (ITED…EAQD), 172-252 (QPPK…TRDP), and 314-561 (EDAH…STNS). Residues 1-656 (MLGWVQRVLP…SIDPLTNLMY (656 aa)) lie on the Cytoplasmic side of the membrane. A compositionally biased stretch (acidic residues) spans 23–50 (EEEEVEPEPEMEAEVEPEPNPEEAETES). A compositionally biased stretch (polar residues) spans 238–247 (GSQAQTSSLP). The segment covering 335–352 (EENKAVEKMPRELSRIEE) has biased composition (basic and acidic residues). Positions 353 to 373 (EKEDEEEEEEEEEEEEEEEVT) are enriched in acidic residues. Residues 404–423 (KLWEEVGEEAKKEAEEKAKE) are compositionally biased toward basic and acidic residues. Positions 424-434 (EAEEVAEEEAE) are enriched in acidic residues. Basic and acidic residues predominate over residues 435–446 (KEPQDWAETKEE). The tract at residues 557-567 (ASTNSAIINDR) is calmodulin-binding CaM1. Residues 568–578 (LQELVKLFKER) carry the IQ-like motif. Residues 585-619 (KLIDPDVTSDEESPKPSPAKKAPEPAPDTKPAEAE) are disordered. Residues 657–678 (VLWLFFVVMAWNWNCWLIPVRW) form a helical membrane-spanning segment. The Extracellular portion of the chain corresponds to 679-687 (AFPYQTPDN). The helical transmembrane segment at 688-709 (IHHWLLMDYLCDLIYFLDITVF) threads the bilayer. Over 710–724 (QTRLQFVRGGDIITD) the chain is Cytoplasmic. The chain crosses the membrane as a helical span at residues 725 to 744 (KKDMRNNYLKSRRFKMDLLS). At 745–760 (LLPLDFLYLKVGVNPL) the chain is on the extracellular side. A helical membrane pass occupies residues 761–773 (LRLPRCLKYMAFF). Residues 774–785 (EFNSRLESILSK) are Cytoplasmic-facing. Residues 786 to 808 (AYVYRVIRTTAYLLYSLHLNSCL) traverse the membrane as a helical segment. Positions 786–885 (AYVYRVIRTT…IGQMRDVVGA (100 aa)) are ion conduction pathway. The Extracellular portion of the chain corresponds to 809 to 831 (YYWASAYQGLGSTHWVYDGVGNS). 2 helical membrane-spanning segments follow: residues 832–858 (YIRC…LFEI) and 859–884 (VFQL…DVVG). Residues 885–1251 (AATAGQTYYR…MPEEREEKAE (367 aa)) are Cytoplasmic-facing. The interval 888 to 964 (AGQTYYRSCM…NIVSKVALFQ (77 aa)) is C-linker. Residues 968-1084 (RQMIFDMLKR…LLRKKARRML (117 aa)) form a cyclic nucleotide-binding domain region. Positions 1029, 1030, 1032, 1042, and 1043 each coordinate 3',5'-cyclic GMP. Arg-1042 is a binding site for 3',5'-cyclic AMP. The interval 1148–1154 (QQELVEQ) is calmodulin-binding CaM2. The tract at residues 1151–1251 (LVEQAKSSQD…MPEEREEKAE (101 aa)) is disordered. A compositionally biased stretch (pro residues) spans 1183–1203 (PPAPRTPPEPPGSPPSSPPPA). A compositionally biased stretch (basic and acidic residues) spans 1242 to 1251 (MPEEREEKAE).

This sequence belongs to the cyclic nucleotide-gated cation channel (TC 1.A.1.5) family. CNGB1 subfamily. The rod cyclic nucleotide-gated channel is a heterotetramer composed of CNGA1 and CNGB1 subunits with 3:1 stoichiometry. CNGA1:CNGB1 channel binds Ca(2+)-bound CALM1 via CaM1 and CaM2 regions of the CNGB1 subunit; this interaction modulates the affinity of the channel for cNMPs in response to intracellular Ca(2+) levels. The olfactory cyclic nucleotide-gated channel is a heterotetramer composed of CNGA2, CNGA4 and CNGB1 subunits with 2:1:1 stoichiometry.

Its subcellular location is the cell membrane. It is found in the cell projection. It localises to the cilium membrane. The catalysed reaction is Ca(2+)(in) = Ca(2+)(out). It carries out the reaction Na(+)(in) = Na(+)(out). The enzyme catalyses K(+)(in) = K(+)(out). It catalyses the reaction NH4(+)(in) = NH4(+)(out). The catalysed reaction is Rb(+)(in) = Rb(+)(out). It carries out the reaction Li(+)(in) = Li(+)(out). The enzyme catalyses Cs(+)(in) = Cs(+)(out). Pore-forming subunit of the rod cyclic nucleotide-gated channel. Mediates rod photoresponses at dim light converting transient changes in intracellular cGMP levels into electrical signals. In the dark, cGMP levels are high and keep the channel open enabling a steady inward current carried by Na(+) and Ca(2+) ions that leads to membrane depolarization and neurotransmitter release from synaptic terminals. Upon photon absorption cGMP levels decline leading to channel closure and membrane hyperpolarization that ultimately slows neurotransmitter release and signals the presence of light, the end point of the phototransduction cascade. Pore-forming subunit of the olfactory cyclic nucleotide-gated channel. Operates in the cilia of olfactory sensory neurons where chemical stimulation of the odorant is converted to an electrical signal. Mediates odorant-induced cAMP-dependent Ca(2+) influx triggering neuron depolarization. The rise of intracellular Ca(2+) levels potentiates the olfactory response by activating Ca(2+)-dependent Cl(-) channels, but it also serves as a negative feedback signal to desensitize the channel for rapid adaptation to odorants. Conducts cGMP- and cAMP-gated ion currents, with permeability for monovalent and divalent cations. The selectivity for Ca(2+) over Na(+) increases with cGMP concentrations, whereas the selectivity among monovalent ions is independent of the cGMP levels. Its function is as follows. High affinity rod photoreceptor phosphodiesterase (PDE6)-binding protein that modulates its catalytic properties: it is a regulator of spontaneous activation of rod PDE6, thereby serving to lower rod photoreceptor 'dark noise' and allowing these sensory cells to operate at the single photon detection limit. This Homo sapiens (Human) protein is Cyclic nucleotide-gated channel beta-1.